Here is a 340-residue protein sequence, read N- to C-terminus: MHTADFLDIEPTEISSILSGGYNHPLLREWQSERQLKKNMLIFPLFISDIPDEATPIDSLPNIKRFGINKLVDYVKPLVEKGLRSVILFGVPLKEGTKDPVGTAADDPEGPVIQAIKLLRKEFPELYIICDVCLCEYTSHGHCGVLYDDGTINRERSVSRIAAVAVNYAKAGAHCVAPSDMIDGRIKDIKKGLISAGLAHKTFVLSYAAKFSGNLYGPFRDAACSSPSNGDRKCYQLPQAGRGLARRALARDKNEGADGIIVKPSTFYLDIMRDASEICEDLPICAYHVSGEYAMLHAAAEKGIVDLKSIAFESHEGFLRAGARLIISYFTPEFLDWLSN.

Zn(2+) is bound by residues cysteine 133, cysteine 135, and cysteine 143. The Schiff-base intermediate with substrate role is filled by lysine 210. 5-aminolevulinate is bound by residues arginine 220 and arginine 232. Residue lysine 263 is the Schiff-base intermediate with substrate of the active site. 2 residues coordinate 5-aminolevulinate: serine 290 and tyrosine 329.

This sequence belongs to the ALAD family. Homooctamer. Zn(2+) is required as a cofactor.

It carries out the reaction 2 5-aminolevulinate = porphobilinogen + 2 H2O + H(+). It functions in the pathway porphyrin-containing compound metabolism; protoporphyrin-IX biosynthesis; coproporphyrinogen-III from 5-aminolevulinate: step 1/4. Catalyzes an early step in the biosynthesis of tetrapyrroles. Binds two molecules of 5-aminolevulinate per subunit, each at a distinct site, and catalyzes their condensation to form porphobilinogen. This Candida glabrata (strain ATCC 2001 / BCRC 20586 / JCM 3761 / NBRC 0622 / NRRL Y-65 / CBS 138) (Yeast) protein is Delta-aminolevulinic acid dehydratase (HEM2).